The following is a 132-amino-acid chain: Small ribosomal subunit protein uS8 (132 aa).

This sequence belongs to the universal ribosomal protein uS8 family. In terms of assembly, part of the 30S ribosomal subunit. Contacts proteins S5 and S12.

In terms of biological role, one of the primary rRNA binding proteins, it binds directly to 16S rRNA central domain where it helps coordinate assembly of the platform of the 30S subunit. In Methylocella silvestris (strain DSM 15510 / CIP 108128 / LMG 27833 / NCIMB 13906 / BL2), this protein is Small ribosomal subunit protein uS8.